We begin with the raw amino-acid sequence, 265 residues long: uncharacterized protein (265 aa).

Residues H7, H9, E95, H131, H156, and D206 each coordinate a divalent metal cation.

The protein belongs to the metallo-dependent hydrolases superfamily. TatD-type hydrolase family. The cofactor is a divalent metal cation.

This is an uncharacterized protein from Buchnera aphidicola subsp. Baizongia pistaciae (strain Bp).